A 247-amino-acid chain; its full sequence is ATP synthase subunit a (247 aa).

The next 6 helical transmembrane spans lie at 26–46 (ITNNTIILFVILIGFTFLFYV), 85–105 (YFPLVLFVFSFILFANLIGLL), 115–135 (IIFTFQIAFSLFFGITLINFF), 141–161 (FFNLFVPSGVPKPLIPFLVVI), 178–198 (FANMLAGHTLLNILSAFIFNV), and 205–225 (ISFLPLLFIVFIIVLEFCIAI).

It belongs to the ATPase A chain family. F-type ATPases have 2 components, CF(1) - the catalytic core - and CF(0) - the membrane proton channel. CF(1) has five subunits: alpha(3), beta(3), gamma(1), delta(1), epsilon(1). CF(0) has three main subunits: a, b and c.

The protein localises to the mitochondrion inner membrane. Mitochondrial membrane ATP synthase (F(1)F(0) ATP synthase or Complex V) produces ATP from ADP in the presence of a proton gradient across the membrane which is generated by electron transport complexes of the respiratory chain. F-type ATPases consist of two structural domains, F(1) - containing the extramembraneous catalytic core and F(0) - containing the membrane proton channel, linked together by a central stalk and a peripheral stalk. During catalysis, ATP synthesis in the catalytic domain of F(1) is coupled via a rotary mechanism of the central stalk subunits to proton translocation. Key component of the proton channel; it may play a direct role in the translocation of protons across the membrane. The polypeptide is ATP synthase subunit a (ATP6) (Acanthamoeba castellanii (Amoeba)).